The primary structure comprises 211 residues: Large ribosomal subunit protein eL13 (211 aa).

Belongs to the eukaryotic ribosomal protein eL13 family. Component of the 60S large ribosomal subunit (LSU).

The protein resides in the cytoplasm. Component of the ribosome, a large ribonucleoprotein complex responsible for the synthesis of proteins in the cell. The small ribosomal subunit (SSU) binds messenger RNAs (mRNAs) and translates the encoded message by selecting cognate aminoacyl-transfer RNA (tRNA) molecules. The large subunit (LSU) contains the ribosomal catalytic site termed the peptidyl transferase center (PTC), which catalyzes the formation of peptide bonds, thereby polymerizing the amino acids delivered by tRNAs into a polypeptide chain. The nascent polypeptides leave the ribosome through a tunnel in the LSU and interact with protein factors that function in enzymatic processing, targeting, and the membrane insertion of nascent chains at the exit of the ribosomal tunnel. As part of the LSU, it is probably required for its formation and the maturation of rRNAs. This chain is Large ribosomal subunit protein eL13 (RPL13), found in Gallus gallus (Chicken).